A 313-amino-acid chain; its full sequence is Olfactory receptor 1M1 (313 aa).

The Extracellular portion of the chain corresponds to 1 to 25 (MEPQNHTSASEFILLGLSEKPDHDP). A glycan (N-linked (GlcNAc...) asparagine) is linked at Asn-5. Residues 26 to 46 (VLFSLFLCMYMITVVGNLLII) form a helical membrane-spanning segment. Residues 47-54 (LAISFDSH) lie on the Cytoplasmic side of the membrane. Residues 55–75 (LHTPMYFFLANLSLVDFCLAT) form a helical membrane-spanning segment. The Extracellular segment spans residues 76–97 (NTVPKMLVNIQTRNKSISYPCC). Asn-89 is a glycosylation site (N-linked (GlcNAc...) asparagine). Cys-97 and Cys-179 are joined by a disulfide. A helical membrane pass occupies residues 98-118 (LTQMYFFHFFGIMDSVLIAVM). Residues 119-142 (AYDRFVAICHPLHYSTIMSPRLCG) lie on the Cytoplasmic side of the membrane. Residues 143-163 (LLVGVPWVYSCFISLTHILLM) traverse the membrane as a helical segment. The Extracellular portion of the chain corresponds to 164-196 (ARLVFCGKNELPHYFCDLTPLLRLSCTDTTVNK). The chain crosses the membrane as a helical span at residues 197-217 (IFVLIVAGMVIATPFVCILAS). Residues 218–244 (YARIIVAIMKVPSAGGRKKAFSTCSSH) lie on the Cytoplasmic side of the membrane. A helical membrane pass occupies residues 245–265 (LSVVALFYGTTIGVYLCPSSV). Over 266 to 274 (RTAVKEKAS) the chain is Extracellular. The helical transmembrane segment at 275 to 292 (AVMYTAVTPMLNPFIYSL) threads the bilayer. Topologically, residues 293-313 (RNRDLKGALKKIINRKISTSS) are cytoplasmic.

It belongs to the G-protein coupled receptor 1 family. As to expression, expressed in testis.

The protein resides in the cell membrane. Its function is as follows. Odorant receptor. The sequence is that of Olfactory receptor 1M1 from Mus musculus (Mouse).